A 507-amino-acid chain; its full sequence is ATP synthase subunit alpha, chloroplastic (507 aa).

170–177 (GDRQTGKT) contributes to the ATP binding site. Disordered regions lie at residues 278–325 (PRRP…TQAG), 392–430 (EPEA…APLP), and 452–471 (GQVQ…NKPE). Over residues 282 to 303 (PGREAHPGDVPHLHPRPPERAA) the composition is skewed to basic and acidic residues. Residues 305-322 (LSSQPGEGSTTASPTVET) show a composition bias toward polar residues.

The protein belongs to the ATPase alpha/beta chains family. As to quaternary structure, F-type ATPases have 2 components, CF(1) - the catalytic core - and CF(0) - the membrane proton channel. CF(1) has five subunits: alpha(3), beta(3), gamma(1), delta(1), epsilon(1). CF(0) has four main subunits: a, b, b' and c.

Its subcellular location is the plastid. The protein localises to the chloroplast thylakoid membrane. It carries out the reaction ATP + H2O + 4 H(+)(in) = ADP + phosphate + 5 H(+)(out). In terms of biological role, produces ATP from ADP in the presence of a proton gradient across the membrane. The alpha chain is a regulatory subunit. The sequence is that of ATP synthase subunit alpha, chloroplastic from Selaginella uncinata (Blue spike-moss).